Here is a 155-residue protein sequence, read N- to C-terminus: MLP-like protein 423 (155 aa).

Belongs to the MLP family.

This is MLP-like protein 423 (MLP423) from Arabidopsis thaliana (Mouse-ear cress).